The chain runs to 579 residues: 2-isopropylmalate synthase (579 aa).

The region spanning 40 to 314 is the Pyruvate carboxyltransferase domain; that stretch reads PRWCAVDLRD…DPMIDFSDID (275 aa). Residues Asp-49, His-253, His-255, and Asn-289 each coordinate Mg(2+). Residues 456–579 form a regulatory domain region; that stretch reads SGKADGQWGR…VNRAIRDAQS (124 aa).

The protein belongs to the alpha-IPM synthase/homocitrate synthase family. LeuA type 2 subfamily. Homodimer. The cofactor is Mg(2+).

It is found in the cytoplasm. It catalyses the reaction 3-methyl-2-oxobutanoate + acetyl-CoA + H2O = (2S)-2-isopropylmalate + CoA + H(+). Its pathway is amino-acid biosynthesis; L-leucine biosynthesis; L-leucine from 3-methyl-2-oxobutanoate: step 1/4. Its function is as follows. Catalyzes the condensation of the acetyl group of acetyl-CoA with 3-methyl-2-oxobutanoate (2-ketoisovalerate) to form 3-carboxy-3-hydroxy-4-methylpentanoate (2-isopropylmalate). This Pseudarthrobacter chlorophenolicus (strain ATCC 700700 / DSM 12829 / CIP 107037 / JCM 12360 / KCTC 9906 / NCIMB 13794 / A6) (Arthrobacter chlorophenolicus) protein is 2-isopropylmalate synthase.